The chain runs to 244 residues: UPF0246 protein FMG_1068 (244 aa).

This sequence belongs to the UPF0246 family.

In Finegoldia magna (strain ATCC 29328 / DSM 20472 / WAL 2508) (Peptostreptococcus magnus), this protein is UPF0246 protein FMG_1068.